Reading from the N-terminus, the 629-residue chain is tRNA uridine 5-carboxymethylaminomethyl modification enzyme MnmG (629 aa).

Residues 13–18 (GGGHAG), valine 125, and serine 180 each bind FAD. NAD(+) is bound at residue 273–287 (GPRYCPSIEDKIHRF). Residue glutamine 370 participates in FAD binding.

The protein belongs to the MnmG family. As to quaternary structure, homodimer. Heterotetramer of two MnmE and two MnmG subunits. FAD serves as cofactor.

It is found in the cytoplasm. Its function is as follows. NAD-binding protein involved in the addition of a carboxymethylaminomethyl (cmnm) group at the wobble position (U34) of certain tRNAs, forming tRNA-cmnm(5)s(2)U34. The polypeptide is tRNA uridine 5-carboxymethylaminomethyl modification enzyme MnmG (Shewanella sp. (strain MR-7)).